Here is a 539-residue protein sequence, read N- to C-terminus: O-phosphoserine--tRNA(Cys) ligase (539 aa).

Substrate contacts are provided by residues 188 to 190 (HMT), 233 to 235 (SAS), 275 to 276 (YY), and asparagine 327.

It belongs to the class-II aminoacyl-tRNA synthetase family. O-phosphoseryl-tRNA(Cys) synthetase subfamily. In terms of assembly, homotetramer. Interacts with SepCysS.

The catalysed reaction is tRNA(Cys) + O-phospho-L-serine + ATP = O-phospho-L-seryl-tRNA(Cys) + AMP + diphosphate. In terms of biological role, catalyzes the attachment of O-phosphoserine (Sep) to tRNA(Cys). This Methanosarcina acetivorans (strain ATCC 35395 / DSM 2834 / JCM 12185 / C2A) protein is O-phosphoserine--tRNA(Cys) ligase.